We begin with the raw amino-acid sequence, 684 residues long: Frizzled-8 (684 aa).

The signal sequence occupies residues 1-27; the sequence is MEWGYLLEVTSLLAALAVLQRSSGAAA. The Extracellular portion of the chain corresponds to 28 to 271; sequence ASAKELACQE…NPFFSQDERA (244 aa). The region spanning 30–151 is the FZ domain; that stretch reads AKELACQEIT…GNPDTLCMDY (122 aa). Cystine bridges form between Cys35–Cys96, Cys43–Cys89, Cys80–Cys118, Cys107–Cys148, and Cys111–Cys135. A glycan (N-linked (GlcNAc...) asparagine) is linked at Asn49. Residue 71-78 coordinates hexadecanoate; the sequence is QFWPLVEI. Residues 95 to 100 are wnt-binding; it reads ICLEDY. The tract at residues 147–152 is wnt-binding; sequence LCMDYN. Asn152 is a glycosylation site (N-linked (GlcNAc...) asparagine). The interval 155–222 is disordered; sequence DLTTAAPSPP…KARPPGGGAA (68 aa). Residues 161–175 are compositionally biased toward pro residues; sequence PSPPRRLPPPQPGEQ. Low complexity-rich tracts occupy residues 176–186 and 199–222; these read PPSGSGHSRPP and GSGD…GGAA. The chain crosses the membrane as a helical span at residues 272–292; sequence FTVFWIGLWSVLCFVSTFATV. Residues 293–308 are Cytoplasmic-facing; it reads STFLIDMERFKYPERP. Residues 309-329 traverse the membrane as a helical segment; that stretch reads IIFLSACYLFVSVGYLVRLVA. The Extracellular portion of the chain corresponds to 330-393; the sequence is GHEKVACSGG…RYETTGPALC (64 aa). A helical membrane pass occupies residues 394–414; it reads TVVFLLVYFFGMASSIWWVIL. Residues 415-436 lie on the Cytoplasmic side of the membrane; sequence SLTWFLAAGMKWGNEAIAGYSQ. The helical transmembrane segment at 437–457 threads the bilayer; sequence YFHLAAWLVPSVKSIAVLALS. Residues 458–480 lie on the Extracellular side of the membrane; sequence SVDGDPVAGICYVGNQSLDNLRG. N-linked (GlcNAc...) asparagine glycosylation is present at Asn472. A helical membrane pass occupies residues 481–501; it reads FVLAPLVIYLFIGTMFLLAGF. Residues 502–529 lie on the Cytoplasmic side of the membrane; that stretch reads VSLFRIRSVIKQQGGPTKTHKLEKLMIR. The helical transmembrane segment at 530–550 threads the bilayer; it reads LGLFTVLYTVPAAVVVACLFY. At 551–581 the chain is on the extracellular side; it reads EQHNRPRWEATHNCPCLRDLQPDQARRPDYA. The helical transmembrane segment at 582 to 602 threads the bilayer; it reads VFMLKYFMCLVVGITSGVWVW. Over 603–684 the chain is Cytoplasmic; that stretch reads SGKTLESWRA…YPKQMPLSQV (82 aa). The Lys-Thr-X-X-X-Trp motif, mediates interaction with the PDZ domain of Dvl family members signature appears at 605–610; that stretch reads KTLESW. The segment covering 630-654 has biased composition (gly residues); it reads AGGSGPGGGGPGPGGGGGHGGGGGS. Residues 630–655 are disordered; sequence AGGSGPGGGGPGPGGGGGHGGGGGSL. Positions 682–684 match the PDZ-binding motif; sequence SQV.

It belongs to the G-protein coupled receptor Fz/Smo family. As to quaternary structure, component of a Wnt-signaling complex that contains a WNT protein, a FZD protein and LRP5 or LRP6. Interacts directly with LRP5 or LRP6; the interaction is promoted by Wnt-binding and signaling and inhibited by DKK1. Interacts (via the PDZ-binding motif) with GPOC (via its PDZ domain). Interacts with RSPO1 and RSPO3. Interacts with glypican GPC3. Post-translationally, ubiquitinated by ZNRF3, leading to its degradation by the proteasome.

The protein localises to the membrane. Its subcellular location is the golgi apparatus. The protein resides in the cell membrane. Its function is as follows. Receptor for Wnt proteins. Component of the Wnt-Fzd-LRP5-LRP6 complex that triggers beta-catenin signaling through inducing aggregation of receptor-ligand complexes into ribosome-sized signalosomes. The beta-catenin canonical signaling pathway leads to the activation of disheveled proteins, inhibition of GSK-3 kinase, nuclear accumulation of beta-catenin and activation of Wnt target genes. A second signaling pathway involving PKC and calcium fluxes has been seen for some family members, but it is not yet clear if it represents a distinct pathway or if it can be integrated in the canonical pathway, as PKC seems to be required for Wnt-mediated inactivation of GSK-3 kinase. Both pathways seem to involve interactions with G-proteins. May be involved in transduction and intercellular transmission of polarity information during tissue morphogenesis and/or in differentiated tissues. Coreceptor along with RYK of Wnt proteins, such as WNT1. The protein is Frizzled-8 (Fzd8) of Rattus norvegicus (Rat).